A 168-amino-acid chain; its full sequence is Small ribosomal subunit protein uS9 (168 aa).

Residues 1 to 38 (MAKIADSIDSAQADSVENVESYSTETPESAAPAAPRPV) are disordered. Residues 9–22 (DSAQADSVENVESY) show a composition bias toward polar residues. Positions 23-37 (STETPESAAPAAPRP) are enriched in low complexity.

This sequence belongs to the universal ribosomal protein uS9 family.

This Leifsonia xyli subsp. xyli (strain CTCB07) protein is Small ribosomal subunit protein uS9.